A 55-amino-acid chain; its full sequence is UPF0391 membrane protein RSp1666 (55 aa).

A run of 2 helical transmembrane segments spans residues Ala-5–Ala-25 and Ile-33–Gly-53.

Belongs to the UPF0391 family.

It is found in the cell membrane. This chain is UPF0391 membrane protein RSp1666, found in Ralstonia nicotianae (strain ATCC BAA-1114 / GMI1000) (Ralstonia solanacearum).